A 413-amino-acid polypeptide reads, in one-letter code: Snake venom metalloproteinase AaPA (413 aa).

Residues 1–20 (MIQVLLVTICLAAFPYQGSS) form the signal peptide. Positions 21 to 189 (IILESGKVND…KKASQLIVST (169 aa)) are excised as a propeptide. A Peptidase M12B domain is found at 193-390 (RYMEIVIVVD…ENPPCILNKP (198 aa)). 2 residues coordinate Ca(2+): E196 and D280. Intrachain disulfides connect C304/C385, C344/C369, and C346/C352. Zn(2+) is bound at residue H329. The active site involves E330. Zn(2+) contacts are provided by H333 and H339. Residues C385, N388, V400, N403, L405, E407, and D413 each contribute to the Ca(2+) site. Residues 391–413 (LRTDTVSTPVSGNELLEAEKDYD) constitute a propeptide that is removed on maturation.

This sequence belongs to the venom metalloproteinase (M12B) family. P-I subfamily. In terms of assembly, monomer. Zn(2+) is required as a cofactor. As to expression, expressed by the venom gland.

It is found in the secreted. Functionally, snake venom zinc metalloprotease that may activate prothrombin. The polypeptide is Snake venom metalloproteinase AaPA (Deinagkistrodon acutus (Hundred-pace snake)).